The primary structure comprises 245 residues: Ubiquinone/menaquinone biosynthesis C-methyltransferase UbiE (245 aa).

Residues Thr71, Asp92, and 118–119 (DA) contribute to the S-adenosyl-L-methionine site.

It belongs to the class I-like SAM-binding methyltransferase superfamily. MenG/UbiE family.

It carries out the reaction a 2-demethylmenaquinol + S-adenosyl-L-methionine = a menaquinol + S-adenosyl-L-homocysteine + H(+). It catalyses the reaction a 2-methoxy-6-(all-trans-polyprenyl)benzene-1,4-diol + S-adenosyl-L-methionine = a 5-methoxy-2-methyl-3-(all-trans-polyprenyl)benzene-1,4-diol + S-adenosyl-L-homocysteine + H(+). It participates in quinol/quinone metabolism; menaquinone biosynthesis; menaquinol from 1,4-dihydroxy-2-naphthoate: step 2/2. Its pathway is cofactor biosynthesis; ubiquinone biosynthesis. Methyltransferase required for the conversion of demethylmenaquinol (DMKH2) to menaquinol (MKH2) and the conversion of 2-polyprenyl-6-methoxy-1,4-benzoquinol (DDMQH2) to 2-polyprenyl-3-methyl-6-methoxy-1,4-benzoquinol (DMQH2). The polypeptide is Ubiquinone/menaquinone biosynthesis C-methyltransferase UbiE (Neisseria meningitidis serogroup C / serotype 2a (strain ATCC 700532 / DSM 15464 / FAM18)).